Here is a 146-residue protein sequence, read N- to C-terminus: Large ribosomal subunit protein uL15 (146 aa).

Residues 1–56 (MKLHELRAAEGANKASKRVGRGTGSGLGKTSGRGQNGQNSRSGGGVRPGFEGGQMP) form a disordered region. Gly residues-rich tracts occupy residues 21 to 35 (RGTG…GRGQ) and 42 to 52 (SGGGVRPGFEG).

This sequence belongs to the universal ribosomal protein uL15 family. In terms of assembly, part of the 50S ribosomal subunit.

Functionally, binds to the 23S rRNA. The sequence is that of Large ribosomal subunit protein uL15 from Clostridium botulinum (strain Okra / Type B1).